We begin with the raw amino-acid sequence, 303 residues long: Taste receptor type 2 member 13 (303 aa).

The Extracellular portion of the chain corresponds to 1 to 7 (MESALPS). The helical transmembrane segment at 8–28 (IFTLVIIAEFIIGNLSNGFIV) threads the bilayer. Topologically, residues 29-55 (LINCIDWVSKRELSSVDKLLIILAISR) are cytoplasmic. The chain crosses the membrane as a helical span at residues 56–76 (IGLIWEILVSWFLALHSLAIF). Over 77-85 (VSGTGLRIM) the chain is Extracellular. The helical transmembrane segment at 86–106 (IFSWIVSNHFNLWLATILSIF) threads the bilayer. Topologically, residues 107 to 128 (YLLKIASFSSPAFLYLKRRVNK) are cytoplasmic. Residues 129-149 (VILMILLGTLVFLFLNLIQIN) form a helical membrane-spanning segment. Topologically, residues 150–184 (MLIKDWLDRYERNTTWNFSMSDFETFSVSVRFTMT) are extracellular. Residues Asn-162 and Asn-166 are each glycosylated (N-linked (GlcNAc...) asparagine). Residues 185 to 205 (MFSLTPFTVAFISFLLLVFSL) traverse the membrane as a helical segment. At 206–232 (QKHLQKMQLNYKGHRDPRTKVHTNALK) the chain is on the cytoplasmic side. The chain crosses the membrane as a helical span at residues 233-253 (IVISFLLLYASFFLSILISWI). Residues 254–261 (SELYQNTV) lie on the Extracellular side of the membrane. A helical membrane pass occupies residues 262 to 282 (IYMLCETIGAFYPSSHSFLLI). The Cytoplasmic portion of the chain corresponds to 283–303 (LGNAKLRQAFLLVAAKVWAKR).

This sequence belongs to the G-protein coupled receptor T2R family.

The protein localises to the membrane. Functionally, receptor that may play a role in the perception of bitterness and is gustducin-linked. May play a role in sensing the chemical composition of the gastrointestinal content. The activity of this receptor may stimulate alpha gustducin, mediate PLC-beta-2 activation and lead to the gating of TRPM5. The polypeptide is Taste receptor type 2 member 13 (TAS2R13) (Pan troglodytes (Chimpanzee)).